A 196-amino-acid polypeptide reads, in one-letter code: Imidazoleglycerol-phosphate dehydratase (196 aa).

It belongs to the imidazoleglycerol-phosphate dehydratase family.

The protein localises to the cytoplasm. The enzyme catalyses D-erythro-1-(imidazol-4-yl)glycerol 3-phosphate = 3-(imidazol-4-yl)-2-oxopropyl phosphate + H2O. The protein operates within amino-acid biosynthesis; L-histidine biosynthesis; L-histidine from 5-phospho-alpha-D-ribose 1-diphosphate: step 6/9. The polypeptide is Imidazoleglycerol-phosphate dehydratase (Clostridium botulinum (strain Kyoto / Type A2)).